The following is a 251-amino-acid chain: UPF0309 protein GK1441 (251 aa).

An SIS domain is found at Val-31–Pro-214.

Belongs to the UPF0309 family.

The chain is UPF0309 protein GK1441 from Geobacillus kaustophilus (strain HTA426).